We begin with the raw amino-acid sequence, 221 residues long: Glutathione S-transferase class-mu 26 kDa isozyme 1 (221 aa).

The GST N-terminal domain occupies 2 to 82 (PAKLGYWKIR…YIADKHGMIG (81 aa)). Glutathione contacts are provided by residues 7-8 (YW), 40-44 (WFSKK), 53-54 (NL), and 66-67 (QS). The region spanning 84 to 202 (TPEERARVSM…ESNRFIKWPL (119 aa)) is the GST C-terminal domain. Tyrosine 110 serves as a coordination point for substrate.

This sequence belongs to the GST superfamily. Mu family. As to quaternary structure, homodimer.

It catalyses the reaction RX + glutathione = an S-substituted glutathione + a halide anion + H(+). In terms of biological role, conjugation of reduced glutathione to a wide number of exogenous and endogenous hydrophobic electrophiles. Its function is as follows. GST isoenzymes appear to play a central role in the parasite detoxification system. Other functions are also suspected including a role in increasing the solubility of haematin in the parasite gut. The polypeptide is Glutathione S-transferase class-mu 26 kDa isozyme 1 (Fasciola hepatica (Liver fluke)).